We begin with the raw amino-acid sequence, 888 residues long: 3-hydroxy-3-methylglutaryl-coenzyme A reductase (888 aa).

At 1 to 9 (MLSRLFRMH) the chain is on the cytoplasmic side. A helical membrane pass occupies residues 10–39 (GLFVASHPWEVIVGTVTLTICMMSMNMFTG). The Lumenal segment spans residues 40 to 56 (NNKICGWNYECPKLEED). A helical membrane pass occupies residues 57–78 (VLSSDIIILTITRCIAILYIYF). Residues 61–218 (DIIILTITRC…MTFFPACVSL (158 aa)) form the SSD domain. Residues 75-78 (YIYF) carry the INSIG-binding motif motif. The Cytoplasmic portion of the chain corresponds to 79–89 (QFQNLRQLGSK). Residue lysine 89 forms a Glycyl lysine isopeptide (Lys-Gly) (interchain with G-Cter in ubiquitin) linkage. Residues 90–114 (YILGIAGLFTIFSSFVFSTVVIHFL) form a helical membrane-spanning segment. The Lumenal segment spans residues 115-123 (DKELTGLNE). The chain crosses the membrane as a helical span at residues 124–149 (ALPFFLLLVDLSRASALAKFALSSNS). Residues 150–159 (QDEVRENIAR) lie on the Cytoplasmic side of the membrane. The helical transmembrane segment at 160–187 (GMAILGPTFTLDALVECLVIGVGTMSGV) threads the bilayer. Topologically, residues 188-191 (RQLE) are lumenal. A helical membrane pass occupies residues 192 to 220 (IMCCFGCMSVLANYFVFMTFFPACVSLVL). The Cytoplasmic portion of the chain corresponds to 221–248 (ELSRESREGRPIWQLSHFARVLEEEENK). Residue lysine 248 forms a Glycyl lysine isopeptide (Lys-Gly) (interchain with G-Cter in ubiquitin) linkage. Residues 249–275 (PNPVTQRVKMIMSLGLVLVHAHSRWIA) traverse the membrane as a helical segment. The Lumenal portion of the chain corresponds to 276–314 (DPSPQNSTADNSKVSLGLDENVSKRIEPSVSLWQFYLSK). Residues asparagine 281 and asparagine 296 are each glycosylated (N-linked (GlcNAc...) asparagine). The chain crosses the membrane as a helical span at residues 315–339 (MISMDIEQVITLSLALLLAVKYIFF). The Cytoplasmic segment spans residues 340–888 (EQAETESTLS…LQGTCTKKAA (549 aa)). Active-site charge relay system residues include glutamate 559, lysine 691, and aspartate 767. Residue histidine 866 is the Proton donor of the active site. Serine 872 bears the Phosphoserine; by AMPK mark.

Belongs to the HMG-CoA reductase family. As to quaternary structure, homotetramer. Homodimer. Interacts (via its SSD) with INSIG1; the interaction, accelerated by sterols, leads to the recruitment of HMGCR to AMFR/gp78 for its ubiquitination by the sterol-mediated ERAD pathway. Interacts with UBIAD1. Post-translationally, undergoes sterol-mediated ubiquitination and ER-associated degradation (ERAD). Accumulation of sterols in the endoplasmic reticulum (ER) membrane, triggers binding of the reductase to the ER membrane protein INSIG1 or INSIG2. The INSIG1 binding leads to the recruitment of the ubiquitin ligase, AMFR/gp78, RNF139 or RNF145, initiating ubiquitination of the reductase. The ubiquitinated reductase is then extracted from the ER membrane and delivered to cytosolic 26S proteosomes by a mechanism probably mediated by the ATPase Valosin-containing protein VCP/p97. The INSIG2-binding leads to the recruitment of the ubiquitin ligase RNF139, initiating ubiquitination of the reductase. Lys-248 is the main site of ubiquitination. Ubiquitination is enhanced by the presence of a geranylgeranylated protein. In terms of processing, N-glycosylated. Deglycosylated by NGLY1 on release from the endoplasmic reticulum (ER) in a sterol-mediated manner. Phosphorylated. Phosphorylation at Ser-872 reduces the catalytic activity.

It is found in the endoplasmic reticulum membrane. Its subcellular location is the peroxisome membrane. It catalyses the reaction (R)-mevalonate + 2 NADP(+) + CoA = (3S)-3-hydroxy-3-methylglutaryl-CoA + 2 NADPH + 2 H(+). It participates in metabolic intermediate biosynthesis; (R)-mevalonate biosynthesis; (R)-mevalonate from acetyl-CoA: step 3/3. With respect to regulation, regulated by a negative feedback mechanism through sterols and non-sterol metabolites derived from mevalonate. Phosphorylation at Ser-872 down-regulates the catalytic activity. Its function is as follows. Catalyzes the conversion of (3S)-hydroxy-3-methylglutaryl-CoA (HMG-CoA) to mevalonic acid, the rate-limiting step in the synthesis of cholesterol and other isoprenoids, thus plays a critical role in cellular cholesterol homeostasis. In Bos taurus (Bovine), this protein is 3-hydroxy-3-methylglutaryl-coenzyme A reductase (HMGCR).